The sequence spans 1123 residues: Rabphilin-1 (1123 aa).

Residues 1–17 show a composition bias toward basic residues; the sequence is MTKSTKLRHCKQKKKKP. 2 disordered regions span residues 1–56 and 88–140; these read MTKS…GSRS and SAHN…PSTH. The span at 36–46 shows a compositional bias: low complexity; the sequence is DAATTTSTTDA. The 127-residue stretch at 215 to 341 folds into the RabBD domain; that stretch reads KAQTGSITAA…KKSGAWFYKE (127 aa). The FYVE-type zinc finger occupies 263-328; it reads GNGVTHCLLC…LCKICSEARE (66 aa). Zn(2+) contacts are provided by cysteine 269, cysteine 272, cysteine 288, cysteine 291, cysteine 296, cysteine 300, cysteine 320, and cysteine 323. 4 stretches are compositionally biased toward polar residues: residues 365–375, 387–400, 410–428, and 487–497; these read PNASSAATPLS, TMPS…TTPK, PGLQ…GTRR, and ASSSDGESFVQ. Disordered stretches follow at residues 365 to 710, 737 to 779, and 796 to 818; these read PNAS…VGSA, TSRA…LRTS, and HIVS…VPIP. The span at 531 to 541 shows a compositional bias: basic and acidic residues; that stretch reads SRREANMERFS. Low complexity predominate over residues 563 to 574; the sequence is ESRPSTRSTSPR. Polar residues-rich tracts occupy residues 605–632 and 649–666; these read VVQS…QQQA and PDRT…TSLV. A compositionally biased stretch (low complexity) spans 742-753; the sequence is SPLAASSSFLSS. A compositionally biased stretch (basic and acidic residues) spans 756 to 768; it reads DDTKQKNRRRDGV. The segment covering 803-818 has biased composition (low complexity); it reads TSSTTSNQNHTSVPIP. C2 domains lie at 844 to 967 and 984 to 1103; these read SLGS…NLYL and DRGK…RQWI. Positions 875, 881, 936, 938, 943, 1015, 1021, 1075, 1077, and 1083 each coordinate Ca(2+).

Ca(2+) serves as cofactor.

It localises to the synapse. In terms of biological role, rab-3 effector. The sequence is that of Rabphilin-1 (rbf-1) from Caenorhabditis elegans.